The sequence spans 318 residues: Pantothenate kinase (318 aa).

Residue 96–103 (GSVAVGKS) participates in ATP binding.

The protein belongs to the prokaryotic pantothenate kinase family.

The protein resides in the cytoplasm. The catalysed reaction is (R)-pantothenate + ATP = (R)-4'-phosphopantothenate + ADP + H(+). It functions in the pathway cofactor biosynthesis; coenzyme A biosynthesis; CoA from (R)-pantothenate: step 1/5. The polypeptide is Pantothenate kinase (Coxiella burnetii (strain Dugway 5J108-111)).